Reading from the N-terminus, the 115-residue chain is NADH-ubiquinone oxidoreductase chain 3 (115 aa).

3 helical membrane-spanning segments follow: residues 3–23 (LLLT…IAFW), 55–75 (FFLV…LLPL), and 84–104 (LNTM…SLAY).

It belongs to the complex I subunit 3 family. As to quaternary structure, core subunit of respiratory chain NADH dehydrogenase (Complex I) which is composed of 45 different subunits. Interacts with TMEM186. Interacts with TMEM242.

The protein localises to the mitochondrion inner membrane. It catalyses the reaction a ubiquinone + NADH + 5 H(+)(in) = a ubiquinol + NAD(+) + 4 H(+)(out). Core subunit of the mitochondrial membrane respiratory chain NADH dehydrogenase (Complex I) which catalyzes electron transfer from NADH through the respiratory chain, using ubiquinone as an electron acceptor. Essential for the catalytic activity of complex I. In Balaenoptera musculus (Blue whale), this protein is NADH-ubiquinone oxidoreductase chain 3.